Reading from the N-terminus, the 479-residue chain is Aspartyl/glutamyl-tRNA(Asn/Gln) amidotransferase subunit B (479 aa).

It belongs to the GatB/GatE family. GatB subfamily. In terms of assembly, heterotrimer of A, B and C subunits.

It catalyses the reaction L-glutamyl-tRNA(Gln) + L-glutamine + ATP + H2O = L-glutaminyl-tRNA(Gln) + L-glutamate + ADP + phosphate + H(+). It carries out the reaction L-aspartyl-tRNA(Asn) + L-glutamine + ATP + H2O = L-asparaginyl-tRNA(Asn) + L-glutamate + ADP + phosphate + 2 H(+). Functionally, allows the formation of correctly charged Asn-tRNA(Asn) or Gln-tRNA(Gln) through the transamidation of misacylated Asp-tRNA(Asn) or Glu-tRNA(Gln) in organisms which lack either or both of asparaginyl-tRNA or glutaminyl-tRNA synthetases. The reaction takes place in the presence of glutamine and ATP through an activated phospho-Asp-tRNA(Asn) or phospho-Glu-tRNA(Gln). This is Aspartyl/glutamyl-tRNA(Asn/Gln) amidotransferase subunit B from Mycoplasma mycoides subsp. mycoides SC (strain CCUG 32753 / NCTC 10114 / PG1).